An 859-amino-acid polypeptide reads, in one-letter code: Heat shock protein 105 kDa (859 aa).

Residue Ser2 is modified to N-acetylserine. The residue at position 471 (Lys471) is an N6-acetyllysine. 2 positions are modified to phosphoserine: Ser509 and Ser510. Disordered stretches follow at residues 515–585 (MDCQ…PPEA) and 797–859 (CEPV…MDLD). Positions 533–555 (QQDNNEAGTQPQVQTDGHQTSQS) are enriched in polar residues. A Phosphoserine modification is found at Ser558. Thr562 bears the Phosphothreonine mark. Basic and acidic residues-rich tracts occupy residues 564–585 (EENK…PPEA) and 806–815 (PKIESPKLER). Phosphoserine is present on Ser810. Residue Thr816 is modified to Phosphothreonine. The segment covering 822–831 (TDKKEEDLDG) has biased composition (basic and acidic residues). A compositionally biased stretch (polar residues) spans 850 to 859 (EKSSINMDLD).

Belongs to the heat shock protein 70 family. As to quaternary structure, interacts with HSPA8/HSC70. Interacts with HSPA1A (via NBD) and HSPA1B (via NBD). Post-translationally, phosphorylation on Ser-509 may be important for regulation of the HSPA8/HSC70 chaperone activity.

Its subcellular location is the cytoplasm. Its function is as follows. Acts as a nucleotide-exchange factor (NEF) for chaperone proteins HSPA1A and HSPA1B, promoting the release of ADP from HSPA1A/B thereby triggering substrate release. Prevents the aggregation of denatured proteins in cells under severe stress, on which the ATP levels decrease markedly. Inhibits HSPA8/HSC70 ATPase and chaperone activities. The polypeptide is Heat shock protein 105 kDa (HSPH1) (Bos taurus (Bovine)).